The sequence spans 668 residues: Ecdysone oxidase (668 aa).

FAD is bound by residues 137–140, Val270, and 536–537; these read NHMV and WH. The Proton acceptor role is filled by His537.

The protein belongs to the GMC oxidoreductase family. FAD is required as a cofactor.

It carries out the reaction ecdysone + O2 = 3-dehydroecdysone + H2O2. Its function is as follows. Involved in the inactivation of ecdysteroid molting hormones by converting ecdysteroids into 3-dehydroecdysteroids. This is Ecdysone oxidase from Bombyx mori (Silk moth).